A 257-amino-acid polypeptide reads, in one-letter code: Imidazole glycerol phosphate synthase subunit HisF (257 aa).

Residues Asp-12 and Asp-131 contribute to the active site.

This sequence belongs to the HisA/HisF family. Heterodimer of HisH and HisF.

The protein resides in the cytoplasm. The catalysed reaction is 5-[(5-phospho-1-deoxy-D-ribulos-1-ylimino)methylamino]-1-(5-phospho-beta-D-ribosyl)imidazole-4-carboxamide + L-glutamine = D-erythro-1-(imidazol-4-yl)glycerol 3-phosphate + 5-amino-1-(5-phospho-beta-D-ribosyl)imidazole-4-carboxamide + L-glutamate + H(+). The protein operates within amino-acid biosynthesis; L-histidine biosynthesis; L-histidine from 5-phospho-alpha-D-ribose 1-diphosphate: step 5/9. Its function is as follows. IGPS catalyzes the conversion of PRFAR and glutamine to IGP, AICAR and glutamate. The HisF subunit catalyzes the cyclization activity that produces IGP and AICAR from PRFAR using the ammonia provided by the HisH subunit. The polypeptide is Imidazole glycerol phosphate synthase subunit HisF (Burkholderia lata (strain ATCC 17760 / DSM 23089 / LMG 22485 / NCIMB 9086 / R18194 / 383)).